Here is a 664-residue protein sequence, read N- to C-terminus: L-glutamate oxidase precursor (664 aa).

The segment at residues 1–44 is a signal peptide (tat-type signal); sequence MTEDHAVVRSDGGLSRRSFAAVAGTATVATALTSGVAAALPAPA. 9 residues coordinate FAD: alanine 105, glutamate 124, alanine 125, arginine 133, methionine 161, arginine 162, aspartate 638, tryptophan 646, and isoleucine 647.

It belongs to the flavin monoamine oxidase family. LGOX subfamily. The mature enzyme is a heterohexamer composed of 2 alpha chains, 2 beta chains and 2 gamma chains (alpha2beta2gamma2). Requires FAD as cofactor. Predicted to be exported by the Tat system. The position of the signal peptide cleavage has not been experimentally proven. In terms of processing, the precursor form is proteolytically cleaved by an endopeptidase into alpha, beta and gamma chains, which form the stable mature enzyme.

It localises to the secreted. It carries out the reaction L-glutamate + O2 + H2O = H2O2 + 2-oxoglutarate + NH4(+). With respect to regulation, activity is stimulated in the presence of Mn(2+), Ca(2+) or Mg(2+). In terms of biological role, catalyzes the oxidative deamination of L-glutamate to 2-ketoglutarate along with the production of ammonia and hydrogen peroxide. This is L-glutamate oxidase precursor from Streptomyces viridosporus (strain ATCC 14672 / DSM 40746 / JCM 4963 / KCTC 9882 / NRRL B-12104 / FH 1290) (Streptomyces ghanaensis).